The sequence spans 77 residues: UPF0248 protein Pcal_0252 (77 aa).

The protein belongs to the UPF0248 family.

The protein is UPF0248 protein Pcal_0252 of Pyrobaculum calidifontis (strain DSM 21063 / JCM 11548 / VA1).